Reading from the N-terminus, the 487-residue chain is N-succinylglutamate 5-semialdehyde dehydrogenase (487 aa).

221–226 (GSSDTG) provides a ligand contact to NAD(+). Catalysis depends on residues glutamate 244 and cysteine 278.

The protein belongs to the aldehyde dehydrogenase family. AstD subfamily.

It catalyses the reaction N-succinyl-L-glutamate 5-semialdehyde + NAD(+) + H2O = N-succinyl-L-glutamate + NADH + 2 H(+). The protein operates within amino-acid degradation; L-arginine degradation via AST pathway; L-glutamate and succinate from L-arginine: step 4/5. Functionally, catalyzes the NAD-dependent reduction of succinylglutamate semialdehyde into succinylglutamate. This chain is N-succinylglutamate 5-semialdehyde dehydrogenase, found in Burkholderia orbicola (strain MC0-3).